Reading from the N-terminus, the 150-residue chain is Deoxyuridine 5'-triphosphate nucleotidohydrolase (150 aa).

Substrate contacts are provided by residues 69 to 71, Asn-82, and 86 to 88; these read RSG and TID.

This sequence belongs to the dUTPase family. Mg(2+) is required as a cofactor.

The enzyme catalyses dUTP + H2O = dUMP + diphosphate + H(+). The protein operates within pyrimidine metabolism; dUMP biosynthesis; dUMP from dCTP (dUTP route): step 2/2. Functionally, this enzyme is involved in nucleotide metabolism: it produces dUMP, the immediate precursor of thymidine nucleotides and it decreases the intracellular concentration of dUTP so that uracil cannot be incorporated into DNA. This chain is Deoxyuridine 5'-triphosphate nucleotidohydrolase, found in Syntrophus aciditrophicus (strain SB).